A 322-amino-acid chain; its full sequence is Chemokine XC receptor 1 (322 aa).

Residues 1–27 are Extracellular-facing; that stretch reads MESSTAFYDYHDKLSLLCENNVIFFST. The helical transmembrane segment at 28 to 55 threads the bilayer; the sequence is ISTIVLYSLVFLLSLVGNSLVLWVLVKY. Topologically, residues 56–65 are cytoplasmic; the sequence is ENLESLTNIF. The chain crosses the membrane as a helical span at residues 66-85; sequence ILNLCLSDLMFSCLLPVLIS. Residues 86 to 98 lie on the Extracellular side of the membrane; sequence AQWSWFLGDFFCK. Cysteines 97 and 170 form a disulfide. Residues 99-120 form a helical membrane-spanning segment; the sequence is FFNMIFGISLYSSIFFLTIMTI. The Cytoplasmic portion of the chain corresponds to 121-137; sequence HRYLSVVSPISTLGIHT. Residues 138–162 form a helical membrane-spanning segment; that stretch reads LRCRVLVTSCVWAASILFSIPDAVF. Residues 163–185 are Extracellular-facing; it reads HKVISLNCKYSEHHGFLASVYQH. A helical membrane pass occupies residues 186–204; the sequence is NIFFLLSMGIILFCYVQIL. Over 205–220 the chain is Cytoplasmic; the sequence is RTLFRTRSRQRHRTVR. The helical transmembrane segment at 221–243 threads the bilayer; it reads LIFTVVVAYFLSWAPYNLTLFLK. The Extracellular portion of the chain corresponds to 244 to 259; that stretch reads TGIIQQSCESLQQLDI. The helical transmembrane segment at 260-283 threads the bilayer; the sequence is AMIICRHLAFSHCCFNPVLYVFVG. Topologically, residues 284–322 are cytoplasmic; that stretch reads IKFRRHLKHLFQQVWLCRKTSSTVPCSPGTFTYEGPSFY.

Belongs to the G-protein coupled receptor 1 family. In terms of tissue distribution, expressed by dendritic cells from the thymus, slpeen, subcutaneous lymph nodes and mesenteric lymph nodes.

The protein localises to the cell membrane. Its function is as follows. Receptor for chemokines SCYC1 and SCYC2. Subsequently transduces a signal by increasing the intracellular calcium ions level. Receptor for XCL1/Lymphotactin. This chain is Chemokine XC receptor 1 (Xcr1), found in Mus musculus (Mouse).